An 88-amino-acid polypeptide reads, in one-letter code: Small ribosomal subunit protein bS16 (88 aa).

It belongs to the bacterial ribosomal protein bS16 family.

The sequence is that of Small ribosomal subunit protein bS16 from Geotalea uraniireducens (strain Rf4) (Geobacter uraniireducens).